The sequence spans 440 residues: Xylose isomerase (440 aa).

Catalysis depends on residues His100 and Asp103. Mg(2+) contacts are provided by Glu231, Glu267, His270, Asp295, Asp306, Asp308, and Asp338.

It belongs to the xylose isomerase family. Homotetramer. The cofactor is Mg(2+).

It is found in the cytoplasm. It catalyses the reaction alpha-D-xylose = alpha-D-xylulofuranose. This chain is Xylose isomerase, found in Paraburkholderia xenovorans (strain LB400).